The sequence spans 102 residues: Small ribosomal subunit protein uS10 (102 aa).

Belongs to the universal ribosomal protein uS10 family. As to quaternary structure, part of the 30S ribosomal subunit.

Functionally, involved in the binding of tRNA to the ribosomes. This is Small ribosomal subunit protein uS10 from Methanosphaerula palustris (strain ATCC BAA-1556 / DSM 19958 / E1-9c).